Consider the following 562-residue polypeptide: Gut esterase 1 (562 aa).

The first 16 residues, 1–16 (MRIFLVSVILINACWA), serve as a signal peptide directing secretion. Asparagine 73 is a glycosylation site (N-linked (GlcNAc...) asparagine; atypical). Cysteine 75 and cysteine 93 are disulfide-bonded. The active-site Acyl-ester intermediate is serine 198. A disulfide bond links cysteine 250 and cysteine 258. Residues glutamate 319 and histidine 452 each act as charge relay system in the active site. The Prevents secretion from ER motif lies at 559-562 (KDEL).

The protein belongs to the type-B carboxylesterase/lipase family. In terms of tissue distribution, expressed only in the intestine.

The protein resides in the endoplasmic reticulum lumen. It carries out the reaction a carboxylic ester + H2O = an alcohol + a carboxylate + H(+). The protein is Gut esterase 1 (ges-1) of Caenorhabditis elegans.